The following is a 183-amino-acid chain: MGGRLIYLMGASGSGKDSLLEAVRERVLAAGGRIVRRVVTRSPEAVGEDALGVSPERFEQLLAEGAFALHWRANGLAYGIPRQIDDWLVDGRDVLINGSRGHLAAARRRYPELCAVLLTVEPQVLRQRLLARGRETIEEIEARLARNARLPLDGEDCQRLDNSASLAQTAEALLRLIRKRACA.

Belongs to the ribose 1,5-bisphosphokinase family.

The catalysed reaction is alpha-D-ribose 1,5-bisphosphate + ATP = 5-phospho-alpha-D-ribose 1-diphosphate + ADP. It participates in metabolic intermediate biosynthesis; 5-phospho-alpha-D-ribose 1-diphosphate biosynthesis; 5-phospho-alpha-D-ribose 1-diphosphate from D-ribose 5-phosphate (route II): step 3/3. Catalyzes the phosphorylation of ribose 1,5-bisphosphate to 5-phospho-D-ribosyl alpha-1-diphosphate (PRPP). This chain is Ribose 1,5-bisphosphate phosphokinase PhnN, found in Azotobacter vinelandii (strain DJ / ATCC BAA-1303).